A 417-amino-acid polypeptide reads, in one-letter code: Probable serine/threonine-protein kinase WNK9 (417 aa).

Positions Met1–Val23 are disordered. One can recognise a Protein kinase domain in the interval Ile32–Leu289. ATP contacts are provided by residues Thr113–Phe116 and Lys163. Catalysis depends on Asp180, which acts as the Proton acceptor.

Belongs to the protein kinase superfamily. Ser/Thr protein kinase family. WNK subfamily.

The catalysed reaction is L-seryl-[protein] + ATP = O-phospho-L-seryl-[protein] + ADP + H(+). The enzyme catalyses L-threonyl-[protein] + ATP = O-phospho-L-threonyl-[protein] + ADP + H(+). In Oryza sativa subsp. japonica (Rice), this protein is Probable serine/threonine-protein kinase WNK9 (WNK9).